A 962-amino-acid chain; its full sequence is Alpha-glucan phosphorylase 1 (962 aa).

Residues 1–63 (MDTMRISGVS…RSFLSVKSIS (63 aa)) constitute a chloroplast transit peptide. A disordered region spans residues 525-552 (AKDAQNGVKTEQEEEKTAGEEEEDEVIP). N6-(pyridoxal phosphate)lysine is present on Lys-808.

The protein belongs to the glycogen phosphorylase family. It depends on pyridoxal 5'-phosphate as a cofactor.

Its subcellular location is the plastid. The protein localises to the chloroplast stroma. The enzyme catalyses [(1-&gt;4)-alpha-D-glucosyl](n) + phosphate = [(1-&gt;4)-alpha-D-glucosyl](n-1) + alpha-D-glucose 1-phosphate. Functionally, phosphorylase is an important allosteric enzyme in carbohydrate metabolism. Enzymes from different sources differ in their regulatory mechanisms and in their natural substrates. However, all known phosphorylases share catalytic and structural properties. May be not required for the degradation of starch, but the phosphorolysis of starch may play an important role in water stress tolerance. In Arabidopsis thaliana (Mouse-ear cress), this protein is Alpha-glucan phosphorylase 1 (PHS1).